Reading from the N-terminus, the 253-residue chain is MALSMPLNGLKEEDKEPLIELFVKAGSDGESIGNCPFSQRLFMILWLKGVVFSVTTVDLKRKPAHLQNLAPGTHPPFITFNSEVKTDVNKIEEFLEEVLCPPKYLKLSPKHPESNTAGMDIFAKFSAYIKNSRPEANEALERGLLKTLQKLDEYLNSPLPGEIDENSMEDIKSSTRRFLDGDEMTLADCNLLPKLHIVKVVAKKYRNFDIPKGMTGIWRYLTNAYSRDEFTNTCPSDKEVEIAYSDVAKRLTK.

At Ala-2 the chain carries N-acetylalanine. Positions Ala-2–Pro-101 are required for insertion into the membrane. A Phosphoserine modification is found at Ser-4. Position 24 is an N6-acetyllysine (Lys-24). Positions Cys-35 to Ser-38 match the G-site motif. The chain crosses the membrane as a helical span at residues Phe-37–Val-57. In terms of domain architecture, GST C-terminal spans Asn-81–Tyr-244. Lys-130 is modified (N6-acetyllysine). A phosphoserine mark is found at Ser-132, Ser-167, and Ser-236. Tyr-244 is modified (phosphotyrosine).

The protein belongs to the chloride channel CLIC family. As to quaternary structure, monomer. Interacts with HRH3. Detected in brain, in cell bodies and dendrites of Purkinje cells in cerebellar neurons (at protein level). Expressed neonatal and adult cardiomyocytes (at protein level). Marked expression was found in hippocampus and cerebellum, and in many other tissues.

It localises to the cytoplasm. The protein localises to the cytoskeleton. It is found in the microtubule organizing center. Its subcellular location is the centrosome. The protein resides in the cytoplasmic vesicle membrane. It localises to the nucleus. The protein localises to the cell membrane. It is found in the mitochondrion. Its subcellular location is the cell junction. The protein resides in the endoplasmic reticulum membrane. The catalysed reaction is chloride(in) = chloride(out). It carries out the reaction thiocyanate(in) = thiocyanate(out). The enzyme catalyses nitrate(in) = nitrate(out). It catalyses the reaction iodide(out) = iodide(in). The catalysed reaction is bromide(in) = bromide(out). It carries out the reaction fluoride(in) = fluoride(out). The enzyme catalyses choline(out) = choline(in). Channel activity is redox- and pH-regulated. Anion vs cation selectivity is enhanced when fully oxidized. Functionally, in the soluble state, catalyzes glutaredoxin-like thiol disulfide exchange reactions with reduced glutathione as electron donor. Can insert into membranes and form voltage-dependent multi-ion conductive channels. Membrane insertion seems to be redox-regulated and may occur only under oxidizing conditions. Has alternate cellular functions like a potential role in angiogenesis or in maintaining apical-basolateral membrane polarity during mitosis and cytokinesis. Could also promote endothelial cell proliferation and regulate endothelial morphogenesis (tubulogenesis). Promotes cell-surface expression of HRH3. In Rattus norvegicus (Rat), this protein is Chloride intracellular channel protein 4 (Clic4).